Here is a 144-residue protein sequence, read N- to C-terminus: MRLNTLSPAEGAKHAPKRLGRGIGSGLGKTGGRGHKGQKSRSGGGVRRGFEGGQMPLYRRLPKFGFTSRKAMITSEVRLSDLAKVEGDVVDLNTLKAANVIGIQIEFAKVILSGEVARPVTIRGLRVTKGARAAIEAAGGKIEE.

The tract at residues 1 to 53 (MRLNTLSPAEGAKHAPKRLGRGIGSGLGKTGGRGHKGQKSRSGGGVRRGFEGG) is disordered. The span at 21–31 (RGIGSGLGKTG) shows a compositional bias: gly residues.

This sequence belongs to the universal ribosomal protein uL15 family. In terms of assembly, part of the 50S ribosomal subunit.

In terms of biological role, binds to the 23S rRNA. The chain is Large ribosomal subunit protein uL15 from Pectobacterium carotovorum subsp. carotovorum (strain PC1).